We begin with the raw amino-acid sequence, 819 residues long: Pentatricopeptide repeat-containing protein At1g52620 (819 aa).

PPR repeat units follow at residues 98 to 132, 133 to 163, 169 to 203, 204 to 238, 239 to 273, 274 to 308, 309 to 343, 344 to 378, 379 to 413, 414 to 448, 449 to 483, 484 to 518, 519 to 553, 554 to 588, 589 to 623, 624 to 659, 709 to 743, and 744 to 779; these read NGFA…NVKL, THEA…VVEL, DVIA…GDSV, DNYS…GCIP, NIVF…GFMP, TLET…GLRV, SVWF…DCKP, DVAT…GLIP, NNLS…GCKP, DIVT…GVSP, DAAI…NILP, DAYV…GVKV, DVVH…HLVP, DKFT…KCKP, NVVT…DLVP, NVVT…KCVP, HAAA…GFSP, and DPVS…GLEV.

The protein belongs to the PPR family. P subfamily.

The chain is Pentatricopeptide repeat-containing protein At1g52620 from Arabidopsis thaliana (Mouse-ear cress).